The following is a 357-amino-acid chain: DNA replication and repair protein RecF (357 aa).

30–37 (GANGSGKT) provides a ligand contact to ATP.

This sequence belongs to the RecF family.

It is found in the cytoplasm. The RecF protein is involved in DNA metabolism; it is required for DNA replication and normal SOS inducibility. RecF binds preferentially to single-stranded, linear DNA. It also seems to bind ATP. This Salmonella agona (strain SL483) protein is DNA replication and repair protein RecF.